The primary structure comprises 47 residues: PhoP/PhoQ regulator MgrB (47 aa).

The helical transmembrane segment at 6–26 (WVALVVVVLACLLLWAQVFNM) threads the bilayer.

Belongs to the MgrB family. May form homooligomers. Probably interacts with the periplasmic domain of PhoQ.

Its subcellular location is the cell inner membrane. In terms of biological role, phoP-regulated transcription is redox-sensitive, being activated when the periplasm becomes more reducing. MgrB acts between DsbA/DsbB and PhoP/PhoQ in this pathway. Represses PhoP/PhoQ signaling, possibly by binding to the periplasmic domain of PhoQ, altering its activity and that of downstream effector PhoP. This Escherichia coli O1:K1 / APEC protein is PhoP/PhoQ regulator MgrB.